We begin with the raw amino-acid sequence, 192 residues long: Transmembrane protein 276 (192 aa).

The first 32 residues, Met-1 to Ala-32, serve as a signal peptide directing secretion. 4 helical membrane-spanning segments follow: residues Gly-35–Leu-55, Ala-63–Val-83, Ser-89–Pro-109, and Val-114–Thr-134.

It localises to the membrane. This Homo sapiens (Human) protein is Transmembrane protein 276.